The following is a 283-amino-acid chain: Protein/nucleic acid deglycase HchA (283 aa).

Residues histidine 86, glutamate 91, and histidine 123 each coordinate Zn(2+). Cysteine 185 functions as the Nucleophile in the catalytic mechanism.

The protein belongs to the peptidase C56 family. HchA subfamily. In terms of assembly, homodimer.

Its subcellular location is the cytoplasm. It catalyses the reaction N(omega)-(1-hydroxy-2-oxopropyl)-L-arginyl-[protein] + H2O = lactate + L-arginyl-[protein] + H(+). The catalysed reaction is N(6)-(1-hydroxy-2-oxopropyl)-L-lysyl-[protein] + H2O = lactate + L-lysyl-[protein] + H(+). The enzyme catalyses S-(1-hydroxy-2-oxopropyl)-L-cysteinyl-[protein] + H2O = lactate + L-cysteinyl-[protein] + H(+). It carries out the reaction N(omega)-(1-hydroxy-2-oxoethyl)-L-arginyl-[protein] + H2O = L-arginyl-[protein] + glycolate + H(+). It catalyses the reaction N(6)-(1-hydroxy-2-oxoethyl)-L-lysyl-[protein] + H2O = glycolate + L-lysyl-[protein] + H(+). The catalysed reaction is S-(1-hydroxy-2-oxoethyl)-L-cysteinyl-[protein] + H2O = glycolate + L-cysteinyl-[protein] + H(+). The enzyme catalyses N(2)-(1-hydroxy-2-oxopropyl)-dGTP + H2O = lactate + dGTP + H(+). It carries out the reaction N(2)-(1-hydroxy-2-oxopropyl)-GTP + H2O = lactate + GTP + H(+). It catalyses the reaction N(2)-(1-hydroxy-2-oxopropyl)-GDP + H2O = lactate + GDP + H(+). The catalysed reaction is N(2)-(1-hydroxy-2-oxopropyl)-GMP + H2O = lactate + GMP + H(+). The enzyme catalyses N(2)-(1-hydroxy-2-oxoethyl)-dGTP + H2O = dGTP + glycolate + H(+). It carries out the reaction N(2)-(1-hydroxy-2-oxoethyl)-GTP + H2O = glycolate + GTP + H(+). It catalyses the reaction N(2)-(1-hydroxy-2-oxoethyl)-GDP + H2O = glycolate + GDP + H(+). The catalysed reaction is N(2)-(1-hydroxy-2-oxoethyl)-GMP + H2O = glycolate + GMP + H(+). The enzyme catalyses an N(2)-(1-hydroxy-2-oxopropyl)-guanosine in RNA + H2O = a guanosine in RNA + lactate + H(+). It carries out the reaction an N(2)-(1-hydroxy-2-oxopropyl)-2'-deoxyguanosine in DNA + H2O = a 2'-deoxyguanosine in DNA + lactate + H(+). It catalyses the reaction an N(2)-(1-hydroxy-2-oxoethyl)-guanosine in RNA + H2O = a guanosine in RNA + glycolate + H(+). The catalysed reaction is an N(2)-(1-hydroxy-2-oxoethyl)-2'-deoxyguanosine in DNA + H2O = a 2'-deoxyguanosine in DNA + glycolate + H(+). Its function is as follows. Protein and nucleotide deglycase that catalyzes the deglycation of the Maillard adducts formed between amino groups of proteins or nucleotides and reactive carbonyl groups of glyoxals. Thus, functions as a protein deglycase that repairs methylglyoxal- and glyoxal-glycated proteins, and releases repaired proteins and lactate or glycolate, respectively. Deglycates cysteine, arginine and lysine residues in proteins, and thus reactivates these proteins by reversing glycation by glyoxals. Acts on early glycation intermediates (hemithioacetals and aminocarbinols), preventing the formation of Schiff bases and advanced glycation endproducts (AGE). Also functions as a nucleotide deglycase able to repair glycated guanine in the free nucleotide pool (GTP, GDP, GMP, dGTP) and in DNA and RNA. Is thus involved in a major nucleotide repair system named guanine glycation repair (GG repair), dedicated to reversing methylglyoxal and glyoxal damage via nucleotide sanitization and direct nucleic acid repair. Plays an important role in protecting cells from carbonyl stress. This is Protein/nucleic acid deglycase HchA from Shigella flexneri.